A 194-amino-acid polypeptide reads, in one-letter code: Ras-related protein RabU (194 aa).

Residue 19–27 (GYDYECGIK) coordinates GTP. Positions 42–50 (PESQVGVDF) match the Effector region motif. Residues 68–72 (PQNKY) and 130–133 (NNSE) each bind GTP.

Belongs to the small GTPase superfamily. Rab family.

In Dictyostelium discoideum (Social amoeba), this protein is Ras-related protein RabU (rabU).